A 456-amino-acid polypeptide reads, in one-letter code: Molybdate transporter 1 (456 aa).

A run of 9 helical transmembrane segments spans residues 67-87 (LIFT…PMPV), 110-130 (IMAA…SGLM), 133-153 (VFNI…GLAF), 177-197 (PWLG…IVLV), 225-245 (VIAN…LAFI), 309-329 (AASV…FGAM), 354-374 (LLGV…VGIL), 377-397 (FPVG…AMAA), and 417-437 (LGSN…VLWM).

Belongs to the SLC26A/SulP transporter (TC 2.A.53) family. In terms of tissue distribution, strongly expressed in roots. Detected in the vascular tissues of hypocotyls, in petioles and vascular tissues of cotyledons and leaves, in mesophyll cells, stamen, sepals and siliques.

It is found in the cell membrane. It localises to the endomembrane system. Its subcellular location is the mitochondrion membrane. Not inhibited by sulfate. In terms of biological role, high affinity molybdate transporter. Unable to transport sulfate. This Arabidopsis thaliana (Mouse-ear cress) protein is Molybdate transporter 1 (MOT1).